Reading from the N-terminus, the 239-residue chain is Glucosamine-6-phosphate deaminase (239 aa).

D62 (proton acceptor; for enolization step) is an active-site residue. N128 serves as the catalytic For ring-opening step. The Proton acceptor; for ring-opening step role is filled by H130. Catalysis depends on E135, which acts as the For ring-opening step.

This sequence belongs to the glucosamine/galactosamine-6-phosphate isomerase family. NagB subfamily.

It catalyses the reaction alpha-D-glucosamine 6-phosphate + H2O = beta-D-fructose 6-phosphate + NH4(+). It participates in amino-sugar metabolism; N-acetylneuraminate degradation; D-fructose 6-phosphate from N-acetylneuraminate: step 5/5. Catalyzes the reversible isomerization-deamination of glucosamine 6-phosphate (GlcN6P) to form fructose 6-phosphate (Fru6P) and ammonium ion. In Lactobacillus helveticus (strain DPC 4571), this protein is Glucosamine-6-phosphate deaminase.